The following is a 344-amino-acid chain: tRNA N6-adenosine threonylcarbamoyltransferase (344 aa).

The Fe cation site is built by histidine 116 and histidine 120. Residues 138–142 (LVSGG), aspartate 171, glycine 184, aspartate 188, and asparagine 277 contribute to the substrate site. Aspartate 307 contributes to the Fe cation binding site.

Belongs to the KAE1 / TsaD family. It depends on Fe(2+) as a cofactor.

Its subcellular location is the cytoplasm. The enzyme catalyses L-threonylcarbamoyladenylate + adenosine(37) in tRNA = N(6)-L-threonylcarbamoyladenosine(37) in tRNA + AMP + H(+). Functionally, required for the formation of a threonylcarbamoyl group on adenosine at position 37 (t(6)A37) in tRNAs that read codons beginning with adenine. Is involved in the transfer of the threonylcarbamoyl moiety of threonylcarbamoyl-AMP (TC-AMP) to the N6 group of A37, together with TsaE and TsaB. TsaD likely plays a direct catalytic role in this reaction. The chain is tRNA N6-adenosine threonylcarbamoyltransferase from Latilactobacillus sakei subsp. sakei (strain 23K) (Lactobacillus sakei subsp. sakei).